A 475-amino-acid polypeptide reads, in one-letter code: Bifunctional protein HldE (475 aa).

The segment at 1-320 (MNSSYLNFKD…AIMFQRSHNT (320 aa)) is ribokinase. ATP is bound at residue 196-199 (NLLE). Residue Asp-265 is part of the active site. Residues 346–475 (FTNGCFDILH…TTSIIEKANL (130 aa)) are cytidylyltransferase.

The protein in the N-terminal section; belongs to the carbohydrate kinase PfkB family. This sequence in the C-terminal section; belongs to the cytidylyltransferase family. In terms of assembly, homodimer.

It carries out the reaction D-glycero-beta-D-manno-heptose 7-phosphate + ATP = D-glycero-beta-D-manno-heptose 1,7-bisphosphate + ADP + H(+). It catalyses the reaction D-glycero-beta-D-manno-heptose 1-phosphate + ATP + H(+) = ADP-D-glycero-beta-D-manno-heptose + diphosphate. It functions in the pathway nucleotide-sugar biosynthesis; ADP-L-glycero-beta-D-manno-heptose biosynthesis; ADP-L-glycero-beta-D-manno-heptose from D-glycero-beta-D-manno-heptose 7-phosphate: step 1/4. Its pathway is nucleotide-sugar biosynthesis; ADP-L-glycero-beta-D-manno-heptose biosynthesis; ADP-L-glycero-beta-D-manno-heptose from D-glycero-beta-D-manno-heptose 7-phosphate: step 3/4. Its function is as follows. Catalyzes the phosphorylation of D-glycero-D-manno-heptose 7-phosphate at the C-1 position to selectively form D-glycero-beta-D-manno-heptose-1,7-bisphosphate. Catalyzes the ADP transfer from ATP to D-glycero-beta-D-manno-heptose 1-phosphate, yielding ADP-D-glycero-beta-D-manno-heptose. The sequence is that of Bifunctional protein HldE from Marinomonas sp. (strain MWYL1).